A 468-amino-acid chain; its full sequence is 3-isopropylmalate dehydratase large subunit (468 aa).

[4Fe-4S] cluster contacts are provided by Cys-349, Cys-409, and Cys-412.

The protein belongs to the aconitase/IPM isomerase family. LeuC type 1 subfamily. Heterodimer of LeuC and LeuD. [4Fe-4S] cluster serves as cofactor.

It carries out the reaction (2R,3S)-3-isopropylmalate = (2S)-2-isopropylmalate. Its pathway is amino-acid biosynthesis; L-leucine biosynthesis; L-leucine from 3-methyl-2-oxobutanoate: step 2/4. In terms of biological role, catalyzes the isomerization between 2-isopropylmalate and 3-isopropylmalate, via the formation of 2-isopropylmaleate. The chain is 3-isopropylmalate dehydratase large subunit from Roseobacter denitrificans (strain ATCC 33942 / OCh 114) (Erythrobacter sp. (strain OCh 114)).